The chain runs to 267 residues: Alpha-tubulin N-acetyltransferase (267 aa).

The region spanning Met1 to Phe197 is the N-acetyltransferase domain. Residues Phe131–Lys144 and Ser167–Lys176 each bind acetyl-CoA.

The protein belongs to the acetyltransferase ATAT1 family.

It catalyses the reaction L-lysyl-[alpha-tubulin] + acetyl-CoA = N(6)-acetyl-L-lysyl-[alpha-tubulin] + CoA + H(+). Its function is as follows. Specifically acetylates 'Lys-40' in alpha-tubulin on the lumenal side of microtubules. Promotes microtubule destabilization and accelerates microtubule dynamics; this activity may be independent of acetylation activity. Acetylates alpha-tubulin with a slow enzymatic rate, due to a catalytic site that is not optimized for acetyl transfer. Enters the microtubule through each end and diffuses quickly throughout the lumen of microtubules. Acetylates only long/old microtubules because of its slow acetylation rate since it does not have time to act on dynamically unstable microtubules before the enzyme is released. This is Alpha-tubulin N-acetyltransferase from Schistosoma japonicum (Blood fluke).